We begin with the raw amino-acid sequence, 180 residues long: Alpha-S2-casein-like A (180 aa).

The signal sequence occupies residues 1–15 (MRFFVFTCLLAVALA). Phosphoserine is present on residues Ser-23 and Ser-25. Positions 46–66 (PTNQETPSVSSSEESVEVQTE) are disordered.

This sequence belongs to the alpha-casein family. In terms of tissue distribution, mammary gland specific. Secreted in milk.

The protein resides in the secreted. Important role in the capacity of milk to transport calcium phosphate. In Oryctolagus cuniculus (Rabbit), this protein is Alpha-S2-casein-like A (CSN1S2A).